We begin with the raw amino-acid sequence, 303 residues long: Bifunctional protein FolD 2 (303 aa).

NADP(+) contacts are provided by residues 169 to 171 (GRS), serine 194, and isoleucine 235.

Belongs to the tetrahydrofolate dehydrogenase/cyclohydrolase family. Homodimer.

The catalysed reaction is (6R)-5,10-methylene-5,6,7,8-tetrahydrofolate + NADP(+) = (6R)-5,10-methenyltetrahydrofolate + NADPH. It carries out the reaction (6R)-5,10-methenyltetrahydrofolate + H2O = (6R)-10-formyltetrahydrofolate + H(+). It functions in the pathway one-carbon metabolism; tetrahydrofolate interconversion. In terms of biological role, catalyzes the oxidation of 5,10-methylenetetrahydrofolate to 5,10-methenyltetrahydrofolate and then the hydrolysis of 5,10-methenyltetrahydrofolate to 10-formyltetrahydrofolate. The protein is Bifunctional protein FolD 2 of Ectopseudomonas mendocina (strain ymp) (Pseudomonas mendocina).